A 100-amino-acid chain; its full sequence is Putative pterin-4-alpha-carbinolamine dehydratase (100 aa).

Belongs to the pterin-4-alpha-carbinolamine dehydratase family.

The catalysed reaction is (4aS,6R)-4a-hydroxy-L-erythro-5,6,7,8-tetrahydrobiopterin = (6R)-L-erythro-6,7-dihydrobiopterin + H2O. This chain is Putative pterin-4-alpha-carbinolamine dehydratase, found in Rhodopseudomonas palustris (strain ATCC BAA-98 / CGA009).